Here is a 102-residue protein sequence, read N- to C-terminus: NADH-quinone oxidoreductase subunit K (102 aa).

Helical transmembrane passes span 5–25, 31–51, and 62–82; these read LGHF…GIFL, IVLL…FVAF, and VFVF…LAIL.

Belongs to the complex I subunit 4L family. In terms of assembly, NDH-1 is composed of 14 different subunits. Subunits NuoA, H, J, K, L, M, N constitute the membrane sector of the complex.

It localises to the cell inner membrane. The enzyme catalyses a quinone + NADH + 5 H(+)(in) = a quinol + NAD(+) + 4 H(+)(out). In terms of biological role, NDH-1 shuttles electrons from NADH, via FMN and iron-sulfur (Fe-S) centers, to quinones in the respiratory chain. The immediate electron acceptor for the enzyme in this species is believed to be ubiquinone. Couples the redox reaction to proton translocation (for every two electrons transferred, four hydrogen ions are translocated across the cytoplasmic membrane), and thus conserves the redox energy in a proton gradient. The polypeptide is NADH-quinone oxidoreductase subunit K (Paracidovorax citrulli (strain AAC00-1) (Acidovorax citrulli)).